A 238-amino-acid chain; its full sequence is Large ribosomal subunit protein uL2 (238 aa).

Positions 200–238 are disordered; it reads HGGGLHQSVSRPSTVSRNAPPGRKVGHIAARRTGRKEGK. Positions 206–216 are enriched in polar residues; sequence QSVSRPSTVSR. A compositionally biased stretch (basic residues) spans 223 to 238; the sequence is KVGHIAARRTGRKEGK.

This sequence belongs to the universal ribosomal protein uL2 family. Part of the 50S ribosomal subunit. Forms a bridge to the 30S subunit in the 70S ribosome.

Functionally, one of the primary rRNA binding proteins. Required for association of the 30S and 50S subunits to form the 70S ribosome, for tRNA binding and peptide bond formation. It has been suggested to have peptidyltransferase activity; this is somewhat controversial. Makes several contacts with the 16S rRNA in the 70S ribosome. This Saccharolobus islandicus (strain Y.N.15.51 / Yellowstone #2) (Sulfolobus islandicus) protein is Large ribosomal subunit protein uL2.